Consider the following 408-residue polypeptide: Phosphopentomutase (408 aa).

Mn(2+)-binding residues include Asp-10, Asp-303, His-308, Asp-344, His-345, and His-356.

Belongs to the phosphopentomutase family. Mn(2+) is required as a cofactor.

The protein localises to the cytoplasm. It carries out the reaction 2-deoxy-alpha-D-ribose 1-phosphate = 2-deoxy-D-ribose 5-phosphate. The enzyme catalyses alpha-D-ribose 1-phosphate = D-ribose 5-phosphate. It functions in the pathway carbohydrate degradation; 2-deoxy-D-ribose 1-phosphate degradation; D-glyceraldehyde 3-phosphate and acetaldehyde from 2-deoxy-alpha-D-ribose 1-phosphate: step 1/2. In terms of biological role, isomerase that catalyzes the conversion of deoxy-ribose 1-phosphate (dRib-1-P) and ribose 1-phosphate (Rib-1-P) to deoxy-ribose 5-phosphate (dRib-5-P) and ribose 5-phosphate (Rib-5-P), respectively. The protein is Phosphopentomutase of Tolumonas auensis (strain DSM 9187 / NBRC 110442 / TA 4).